Consider the following 508-residue polypeptide: Cytochrome P450 monooxygenase pkfB (508 aa).

The helical transmembrane segment at 9–29 threads the bilayer; sequence FSLGLSQILVCLALLYAAIHI. Residues Asn57 and Asn305 are each glycosylated (N-linked (GlcNAc...) asparagine). Cys450 contributes to the heme binding site.

It belongs to the cytochrome P450 family. Heme serves as cofactor.

The protein localises to the membrane. The protein operates within secondary metabolite biosynthesis. Cytochrome P450 monooxygenase; part of the gene cluster that mediates the biosynthesis of aspernidine A, a prenylated isoindolinone. The starting point of the biosynthesis of aspernidin A is the production of orsellinaldehyde by the non-reducing polyketide synthase pkfA. Hydroxylation, methylation of one of the phenol groups, and prenylation, presumably catalyzed by the prenyltransferase pkfE, would be needed to yield aspernidine D. Subsequently, the cytochrome P450 monooxygenase pkfB is responsible for hydroxylation of aspernidine D to yield aspernidine E. The dehydrogenase pkfF may be responsible for further oxidation of aspernidine E to form a dialdehyde intermediate which is further transformed in a series of steps, some of which are enzyme-mediated, to generate aspernidine A. The possibility that additional enzymes outside of the cluster are involved in aspernidine A biosynthesis cannot be excluded. This is Cytochrome P450 monooxygenase pkfB from Emericella nidulans (strain FGSC A4 / ATCC 38163 / CBS 112.46 / NRRL 194 / M139) (Aspergillus nidulans).